The following is a 345-amino-acid chain: S-adenosylmethionine:tRNA ribosyltransferase-isomerase (345 aa).

It belongs to the QueA family. As to quaternary structure, monomer.

It localises to the cytoplasm. The catalysed reaction is 7-aminomethyl-7-carbaguanosine(34) in tRNA + S-adenosyl-L-methionine = epoxyqueuosine(34) in tRNA + adenine + L-methionine + 2 H(+). It functions in the pathway tRNA modification; tRNA-queuosine biosynthesis. Functionally, transfers and isomerizes the ribose moiety from AdoMet to the 7-aminomethyl group of 7-deazaguanine (preQ1-tRNA) to give epoxyqueuosine (oQ-tRNA). The sequence is that of S-adenosylmethionine:tRNA ribosyltransferase-isomerase from Shewanella baltica (strain OS185).